A 332-amino-acid chain; its full sequence is Ribosomal RNA small subunit methyltransferase H (332 aa).

S-adenosyl-L-methionine contacts are provided by residues 36 to 38 (GGY), Asp54, Phe81, Asp102, and Gln109.

This sequence belongs to the methyltransferase superfamily. RsmH family.

It localises to the cytoplasm. It carries out the reaction cytidine(1402) in 16S rRNA + S-adenosyl-L-methionine = N(4)-methylcytidine(1402) in 16S rRNA + S-adenosyl-L-homocysteine + H(+). Its function is as follows. Specifically methylates the N4 position of cytidine in position 1402 (C1402) of 16S rRNA. The sequence is that of Ribosomal RNA small subunit methyltransferase H from Nitrobacter winogradskyi (strain ATCC 25391 / DSM 10237 / CIP 104748 / NCIMB 11846 / Nb-255).